The primary structure comprises 467 residues: A-type ATP synthase subunit B (467 aa).

The tract at residues 95–114 (GKGQPRDHMPLPPPEDFRDV) is disordered.

The protein belongs to the ATPase alpha/beta chains family. In terms of assembly, has multiple subunits with at least A(3), B(3), C, D, E, F, H, I and proteolipid K(x).

The protein localises to the cell membrane. Component of the A-type ATP synthase that produces ATP from ADP in the presence of a proton gradient across the membrane. The B chain is a regulatory subunit. The chain is A-type ATP synthase subunit B from Pyrobaculum neutrophilum (strain DSM 2338 / JCM 9278 / NBRC 100436 / V24Sta) (Thermoproteus neutrophilus).